The chain runs to 236 residues: Pyridoxine 5'-phosphate synthase (236 aa).

N6 provides a ligand contact to 3-amino-2-oxopropyl phosphate. Residue 8 to 9 (DH) participates in 1-deoxy-D-xylulose 5-phosphate binding. R17 provides a ligand contact to 3-amino-2-oxopropyl phosphate. The Proton acceptor role is filled by H42. 1-deoxy-D-xylulose 5-phosphate-binding residues include R44 and H49. Catalysis depends on E69, which acts as the Proton acceptor. T99 is a binding site for 1-deoxy-D-xylulose 5-phosphate. The active-site Proton donor is H190. 3-amino-2-oxopropyl phosphate is bound by residues G191 and 212-213 (GH).

The protein belongs to the PNP synthase family. In terms of assembly, homooctamer; tetramer of dimers.

The protein resides in the cytoplasm. The enzyme catalyses 3-amino-2-oxopropyl phosphate + 1-deoxy-D-xylulose 5-phosphate = pyridoxine 5'-phosphate + phosphate + 2 H2O + H(+). The protein operates within cofactor biosynthesis; pyridoxine 5'-phosphate biosynthesis; pyridoxine 5'-phosphate from D-erythrose 4-phosphate: step 5/5. In terms of biological role, catalyzes the complicated ring closure reaction between the two acyclic compounds 1-deoxy-D-xylulose-5-phosphate (DXP) and 3-amino-2-oxopropyl phosphate (1-amino-acetone-3-phosphate or AAP) to form pyridoxine 5'-phosphate (PNP) and inorganic phosphate. This chain is Pyridoxine 5'-phosphate synthase, found in Chloroherpeton thalassium (strain ATCC 35110 / GB-78).